A 509-amino-acid polypeptide reads, in one-letter code: MDIRAAEISQILKNEIANFGNEASVTEVGQVLSVGDGIARVYGLDNVEAGEMVEFENGVRGMALNLEVDNVGVVIFGSDRDIKEGQTVKRTGAIVDVPVGRGLLGRVVDALGNPIDGKGPIPYETRSRVDVKAPGIIPRKSVHEPMATGLKAIDALIPIGRGQRELIIGDRQTGKTAVALDAILNQKSANQGTDESAKLYCVYVAVGQKRSTVAQFVKVLEENGALEYSIIVAATASDPAPMQFLAPFSGCAMGEYFRDNAMHALIVYDDLSKQAVAYRQMSLLLRRPPGREAYPGDVFYLHSRLLERAAKLRDANGAGSLTALPVIETQANDVSAYIPTNVISITDGQIFLETDLFYQGIRPAVNVGLSVSRVGSAAQTKAMKKVAGKIKGELAQYREMAAFAQFGSDLDATTQRLLARGSRLTELLKQPQFAPLKMEEQVVVIYAGVNGYLDALPVARVRAFEDGLLALVRTSHGDLLETIRSSKDLSDASTQALKAIVETYAKNFA.

Residue 169–176 (GDRQTGKT) coordinates ATP.

This sequence belongs to the ATPase alpha/beta chains family. As to quaternary structure, F-type ATPases have 2 components, CF(1) - the catalytic core - and CF(0) - the membrane proton channel. CF(1) has five subunits: alpha(3), beta(3), gamma(1), delta(1), epsilon(1). CF(0) has three main subunits: a(1), b(2) and c(9-12). The alpha and beta chains form an alternating ring which encloses part of the gamma chain. CF(1) is attached to CF(0) by a central stalk formed by the gamma and epsilon chains, while a peripheral stalk is formed by the delta and b chains.

The protein resides in the cell inner membrane. The enzyme catalyses ATP + H2O + 4 H(+)(in) = ADP + phosphate + 5 H(+)(out). Its function is as follows. Produces ATP from ADP in the presence of a proton gradient across the membrane. The alpha chain is a regulatory subunit. The polypeptide is ATP synthase subunit alpha (Methylocella silvestris (strain DSM 15510 / CIP 108128 / LMG 27833 / NCIMB 13906 / BL2)).